Here is a 701-residue protein sequence, read N- to C-terminus: Peptide transporter CstA (701 aa).

Residues 1 to 6 (MNKSGK) are Cytoplasmic-facing. A helical transmembrane segment spans residues 7–27 (YLVWTVLSVMGAFALGYIALN). Topologically, residues 28–33 (RGEQIN) are periplasmic. A helical membrane pass occupies residues 34 to 54 (ALWIVVASVCIYLIAYRFYGL). Residues 55–86 (YIAKNVLAVDPTRMTPAVRHNDGLDYVPTDKK) lie on the Cytoplasmic side of the membrane. Residues 87-107 (VLFGHHFAAIAGAGPLVGPVL) traverse the membrane as a helical segment. Topologically, residues 108–117 (AAQMGYLPGM) are periplasmic. The chain crosses the membrane as a helical span at residues 118-138 (IWLLAGVVLAGAVQDFMVLFV). The Cytoplasmic segment spans residues 139-160 (STRRDGRSLGELVKEEMGPTAG). Residues 161–181 (VIALVACFMIMVIILAVLAMI) form a helical membrane-spanning segment. At 182-189 (VVKALTHS) the chain is on the periplasmic side. Residues 190-210 (PWGTYTVAFTIPLALFMGIYL) traverse the membrane as a helical segment. The Cytoplasmic segment spans residues 211 to 217 (RYLRPGR). A helical transmembrane segment spans residues 218–238 (IGEVSVIGLVFLIFAIISGGW). The Periplasmic segment spans residues 239–255 (VAESPTWAPYFDFTGVQ). A helical membrane pass occupies residues 256-276 (LTWMLVGYGFVAAVLPVWLLL). Residues 277–280 (APRD) are Cytoplasmic-facing. A helical transmembrane segment spans residues 281–301 (YLSTFLKIGTIVGLAVGILIM). Topologically, residues 302–324 (RPTLTMPALTKFVDGTGPVWTGN) are periplasmic. Residues 325 to 345 (LFPFLFITIACGAVSGFHALI) form a helical membrane-spanning segment. Over 346–372 (SSGTTPKMLANEGQACFIGYGGMLMES) the chain is Cytoplasmic. The helical transmembrane segment at 373–393 (FVAIMALVSACIIDPGVYFAM) threads the bilayer. Residues 394–395 (NS) are Periplasmic-facing. The helical transmembrane segment at 396-416 (PMAVLAPAGTADVVASAAQVV) threads the bilayer. Residues 417-439 (SSWGFSITPDTLNQIASEVGEQS) lie on the Cytoplasmic side of the membrane. A helical transmembrane segment spans residues 440–460 (IISRAGGAPTLAVGMAYILHG). Over 461–463 (ALG) the chain is Periplasmic. Residues 464–484 (GMMDVAFWYHFAILFEALFIL) form a helical membrane-spanning segment. The Cytoplasmic portion of the chain corresponds to 485–523 (TAVDAGTRAARFMLQDLLGVVSPGLKRTDSLPANLLATA). A helical transmembrane segment spans residues 524 to 544 (LCVLAWGYFLHQGVVDPLGGI). At 545-550 (NTLWPL) the chain is on the periplasmic side. Residues 551 to 571 (FGIANQMLAGMALMLCAVVLF) traverse the membrane as a helical segment. The Cytoplasmic segment spans residues 572-577 (KMKRQR). Residues 578–598 (YAWVALVPTAWLLICTLTAGW) traverse the membrane as a helical segment. Residues 599 to 643 (QKAFSPDAKVGFLAIANKFQAMIDSGNIPSQYTESQLAQLVFNNR) lie on the Periplasmic side of the membrane. Residues 644–664 (LDAGLTIFFMVVVVVLALFSI) form a helical membrane-spanning segment. Topologically, residues 665–701 (KTALAALKDPKPTAKETPYEPMPENVEEIVAQAKGAH) are cytoplasmic.

Belongs to the peptide transporter carbon starvation (CstA) (TC 2.A.114) family.

It localises to the cell inner membrane. Involved in peptide utilization during carbon starvation. The protein is Peptide transporter CstA of Escherichia coli (strain K12).